The following is a 469-amino-acid chain: Cytoplasmic tRNA 2-thiolation protein 2 (469 aa).

It belongs to the CTU2/NCS2 family.

It localises to the cytoplasm. Its pathway is tRNA modification; 5-methoxycarbonylmethyl-2-thiouridine-tRNA biosynthesis. In terms of biological role, plays a central role in 2-thiolation of mcm(5)S(2)U at tRNA wobble positions of tRNA(Lys), tRNA(Glu) and tRNA(Gln). May act by forming a heterodimer with NCS6 that ligates sulfur from thiocarboxylated URM1 onto the uridine of tRNAs at wobble position. Prior mcm(5) tRNA modification by the elongator complex is required for 2-thiolation. May also be involved in protein urmylation. This is Cytoplasmic tRNA 2-thiolation protein 2 from Candida glabrata (strain ATCC 2001 / BCRC 20586 / JCM 3761 / NBRC 0622 / NRRL Y-65 / CBS 138) (Yeast).